The chain runs to 324 residues: Geranylgeranyl pyrophosphate synthase dpmpD (324 aa).

Isopentenyl diphosphate contacts are provided by K50, R53, and H82. Mg(2+)-binding residues include D89 and D93. R98 is a dimethylallyl diphosphate binding site. R99 is an isopentenyl diphosphate binding site. 3 residues coordinate dimethylallyl diphosphate: K176, T177, and Q210. A Mg(2+)-binding site is contributed by D213. Dimethylallyl diphosphate-binding residues include N217, K227, and K237.

This sequence belongs to the FPP/GGPP synthase family. It depends on Mg(2+) as a cofactor.

The catalysed reaction is isopentenyl diphosphate + dimethylallyl diphosphate = (2E)-geranyl diphosphate + diphosphate. It carries out the reaction isopentenyl diphosphate + (2E)-geranyl diphosphate = (2E,6E)-farnesyl diphosphate + diphosphate. It catalyses the reaction isopentenyl diphosphate + (2E,6E)-farnesyl diphosphate = (2E,6E,10E)-geranylgeranyl diphosphate + diphosphate. It functions in the pathway secondary metabolite biosynthesis; terpenoid biosynthesis. In terms of biological role, geranylgeranyl pyrophosphate synthase; part of the gene cluster that mediates the biosynthesis of diterpenoid pyrones. The first step of the pathway is the synthesis of the alpha-pyrone moiety by the polyketide synthase dpmpA via condensation of one acetyl-CoA starter unit with 3 malonyl-CoA units and 2 methylations. The alpha-pyrone is then combined with geranylgeranyl pyrophosphate (GGPP) formed by the GGPP synthase dpmpD through the action of the prenyltransferase dpmpC to yield a linear alpha-pyrone diterpenoid. Subsequent steps in the diterpenoid pyrone biosynthetic pathway involve the decalin core formation, which is initiated by the epoxidation of the C10-C11 olefin by the FAD-dependent oxidoreductase dpmpE, and is followed by a cyclization cascade catalyzed by the terpene cyclase dpmpB. The short chain dehydrogenase/reductase dpmpG then oxidizes the 8S hydroxy group to a ketone and the short chain dehydrogenase/reductase dpmpH reduces the ketone to the 8R hydroxy group to yield higginsianin B. Higginsianin B is further methylated by the methyltransferase dpmpI to produce the intermediate named FDDP B. The cytochrome P450 monooxygenase dpmpJ then oxidizes the C-26 methyl to primary alcohol, producing the final diterpenoid pyrone with a C-26 primary alcohol on the gamma-pyrone moiety named FDDP C. In Macrophomina phaseolina (strain MS6) (Charcoal rot fungus), this protein is Geranylgeranyl pyrophosphate synthase dpmpD.